The primary structure comprises 477 residues: Ribulose bisphosphate carboxylase large chain (477 aa).

Positions 1–2 are excised as a propeptide; sequence MS. Position 3 is an N-acetylproline (proline 3). Lysine 14 is subject to N6,N6,N6-trimethyllysine. Residues asparagine 123 and threonine 173 each coordinate substrate. Catalysis depends on lysine 175, which acts as the Proton acceptor. Residue lysine 177 coordinates substrate. Mg(2+)-binding residues include lysine 201, aspartate 203, and glutamate 204. N6-carboxylysine is present on lysine 201. Histidine 294 acts as the Proton acceptor in catalysis. Arginine 295, histidine 327, and serine 379 together coordinate substrate.

Belongs to the RuBisCO large chain family. Type I subfamily. In terms of assembly, heterohexadecamer of 8 large chains and 8 small chains; disulfide-linked. The disulfide link is formed within the large subunit homodimers. The cofactor is Mg(2+). Post-translationally, the disulfide bond which can form in the large chain dimeric partners within the hexadecamer appears to be associated with oxidative stress and protein turnover.

Its subcellular location is the plastid. The protein resides in the chloroplast. It carries out the reaction 2 (2R)-3-phosphoglycerate + 2 H(+) = D-ribulose 1,5-bisphosphate + CO2 + H2O. The enzyme catalyses D-ribulose 1,5-bisphosphate + O2 = 2-phosphoglycolate + (2R)-3-phosphoglycerate + 2 H(+). RuBisCO catalyzes two reactions: the carboxylation of D-ribulose 1,5-bisphosphate, the primary event in carbon dioxide fixation, as well as the oxidative fragmentation of the pentose substrate in the photorespiration process. Both reactions occur simultaneously and in competition at the same active site. This chain is Ribulose bisphosphate carboxylase large chain, found in Dioscorea elephantipes (Elephant's foot yam).